The following is a 436-amino-acid chain: MGLEDAGDLVLHIVLSKIGPENTARVACVSKRLKVSASEESLWSIFCSNDLNISTPLDPHGDPAPSFKRAYQLWRESFRMYPWNLVKRVRLCWDNLKQWLTLNFPEAKATLRKGVTEDDLQEFETSLKVKLPLPTRLLYRFVDGQELSSPNGLDGSLGLIGGYSAYSHDVNVYLLPLKEVMRETKESFMRDLGFSSRLDLIVMAASVVASLKIFLLDCTTGQLFTGTSNRQLLPCVPDALVRSVHDTNGDQQQDAMLLWLEEHGRRLQTGTINVRQQNNVKSISLFPEIPPLCSVSVTNGVQVRASSVFIPEISNLRDQPPAYWYAYSIRMSLMPEGCILNGTHHSSCQLYWRHWVIRADNEVIDNVNGEAVIGKYPLLQAGEEEFVYESCSSFPTTAGSIDGSFTFVPGSLRDPKGSQFEVKVVEFPLELPDYIF.

The F-box; degenerate domain maps to 75-111; the sequence is RESFRMYPWNLVKRVRLCWDNLKQWLTLNFPEAKATL. The region spanning 295 to 436 is the ApaG domain; the sequence is VSVTNGVQVR…FPLELPDYIF (142 aa).

Part of a SCF (ASK-cullin-F-box) protein ligase complex. Interacts with SKP1A/ASK1, SKP1B/ASK2, ASK4, ASK11 and ASK13.

It participates in protein modification; protein ubiquitination. Functionally, component of SCF(ASK-cullin-F-box) E3 ubiquitin ligase complexes, which may mediate the ubiquitination and subsequent proteasomal degradation of target proteins. In Arabidopsis thaliana (Mouse-ear cress), this protein is F-box protein SKIP16 (SKIP16).